The following is a 394-amino-acid chain: Argininosuccinate synthase (394 aa).

Residue 8-16 (AYSGGLDTS) participates in ATP binding. 2 residues coordinate L-citrulline: tyrosine 86 and serine 91. Glycine 116 is a binding site for ATP. Positions 118, 122, and 123 each coordinate L-aspartate. Asparagine 122 provides a ligand contact to L-citrulline. L-citrulline-binding residues include arginine 126, serine 172, serine 181, glutamate 257, and tyrosine 269.

Belongs to the argininosuccinate synthase family. Type 1 subfamily. As to quaternary structure, homotetramer.

It localises to the cytoplasm. It carries out the reaction L-citrulline + L-aspartate + ATP = 2-(N(omega)-L-arginino)succinate + AMP + diphosphate + H(+). It functions in the pathway amino-acid biosynthesis; L-arginine biosynthesis; L-arginine from L-ornithine and carbamoyl phosphate: step 2/3. This chain is Argininosuccinate synthase, found in Methanosarcina acetivorans (strain ATCC 35395 / DSM 2834 / JCM 12185 / C2A).